Consider the following 171-residue polypeptide: Lipoprotein signal peptidase (171 aa).

Transmembrane regions (helical) follow at residues 8–28 (SFLW…YIVV), 64–84 (WQQY…VYFL), and 99–119 (ALII…GFVV). Active-site residues include Asp-120 and Asp-138. The helical transmembrane segment at 133 to 153 (VFNIADIAICIGAGLLALDAF) threads the bilayer.

It belongs to the peptidase A8 family.

It is found in the cell inner membrane. The enzyme catalyses Release of signal peptides from bacterial membrane prolipoproteins. Hydrolyzes -Xaa-Yaa-Zaa-|-(S,diacylglyceryl)Cys-, in which Xaa is hydrophobic (preferably Leu), and Yaa (Ala or Ser) and Zaa (Gly or Ala) have small, neutral side chains.. It functions in the pathway protein modification; lipoprotein biosynthesis (signal peptide cleavage). Functionally, this protein specifically catalyzes the removal of signal peptides from prolipoproteins. This chain is Lipoprotein signal peptidase, found in Haemophilus influenzae (strain PittGG).